We begin with the raw amino-acid sequence, 266 residues long: Glucosamine-6-phosphate deaminase (266 aa).

Asp-72 serves as the catalytic Proton acceptor; for enolization step. The active-site For ring-opening step is the Asp-141. Catalysis depends on His-143, which acts as the Proton acceptor; for ring-opening step. Glu-148 functions as the For ring-opening step in the catalytic mechanism.

Belongs to the glucosamine/galactosamine-6-phosphate isomerase family. NagB subfamily. In terms of assembly, homohexamer.

The catalysed reaction is alpha-D-glucosamine 6-phosphate + H2O = beta-D-fructose 6-phosphate + NH4(+). It participates in amino-sugar metabolism; N-acetylneuraminate degradation; D-fructose 6-phosphate from N-acetylneuraminate: step 5/5. Its activity is regulated as follows. Allosterically activated by N-acetylglucosamine 6-phosphate (GlcNAc6P). Functionally, catalyzes the reversible isomerization-deamination of glucosamine 6-phosphate (GlcN6P) to form fructose 6-phosphate (Fru6P) and ammonium ion. This chain is Glucosamine-6-phosphate deaminase, found in Pectobacterium carotovorum subsp. carotovorum (strain PC1).